The primary structure comprises 211 residues: Putative F-box protein At1g52490 (211 aa).

The F-box domain maps to 12-59 (EEEYLQLPLDLIVEILKKLPLKSLVRFRCVSKQFSTIICSLRDFIESV).

The polypeptide is Putative F-box protein At1g52490 (Arabidopsis thaliana (Mouse-ear cress)).